Reading from the N-terminus, the 609-residue chain is Threonine--tRNA ligase (609 aa).

The segment at 1-143 (MRVLYIHAER…SFKPEGAKVE (143 aa)) is editing domain. Catalytic regions lie at residues 195 to 491 (PRYL…PRLP) and 196 to 491 (RYLD…PRLP). Positions 288, 339, and 460 each coordinate Zn(2+).

It belongs to the class-II aminoacyl-tRNA synthetase family. In terms of assembly, homodimer. Requires Zn(2+) as cofactor.

Its subcellular location is the cytoplasm. The enzyme catalyses tRNA(Thr) + L-threonine + ATP = L-threonyl-tRNA(Thr) + AMP + diphosphate + H(+). Functionally, catalyzes the attachment of threonine to tRNA(Thr) in a two-step reaction: L-threonine is first activated by ATP to form Thr-AMP and then transferred to the acceptor end of tRNA(Thr). Also edits incorrectly charged L-seryl-tRNA(Thr). This Pyrobaculum islandicum (strain DSM 4184 / JCM 9189 / GEO3) protein is Threonine--tRNA ligase.